We begin with the raw amino-acid sequence, 549 residues long: Oxygen-dependent choline dehydrogenase (549 aa).

Position 4–33 (4–33) interacts with FAD; the sequence is DYIIIGSGSAGSALAHRLSEDSRNSVIVLE. His465 (proton acceptor) is an active-site residue.

Belongs to the GMC oxidoreductase family. Requires FAD as cofactor.

It carries out the reaction choline + A = betaine aldehyde + AH2. The enzyme catalyses betaine aldehyde + NAD(+) + H2O = glycine betaine + NADH + 2 H(+). The protein operates within amine and polyamine biosynthesis; betaine biosynthesis via choline pathway; betaine aldehyde from choline (cytochrome c reductase route): step 1/1. Functionally, involved in the biosynthesis of the osmoprotectant glycine betaine. Catalyzes the oxidation of choline to betaine aldehyde and betaine aldehyde to glycine betaine at the same rate. The sequence is that of Oxygen-dependent choline dehydrogenase from Sinorhizobium fredii (strain NBRC 101917 / NGR234).